The primary structure comprises 308 residues: Aspartate carbamoyltransferase catalytic subunit (308 aa).

Residues arginine 55 and threonine 56 each contribute to the carbamoyl phosphate site. Residue lysine 83 coordinates L-aspartate. Residues arginine 105, histidine 133, and glutamine 136 each contribute to the carbamoyl phosphate site. 2 residues coordinate L-aspartate: arginine 166 and arginine 220. Residues glycine 261 and proline 262 each contribute to the carbamoyl phosphate site.

The protein belongs to the aspartate/ornithine carbamoyltransferase superfamily. ATCase family. As to quaternary structure, heterododecamer (2C3:3R2) of six catalytic PyrB chains organized as two trimers (C3), and six regulatory PyrI chains organized as three dimers (R2).

It catalyses the reaction carbamoyl phosphate + L-aspartate = N-carbamoyl-L-aspartate + phosphate + H(+). It participates in pyrimidine metabolism; UMP biosynthesis via de novo pathway; (S)-dihydroorotate from bicarbonate: step 2/3. Functionally, catalyzes the condensation of carbamoyl phosphate and aspartate to form carbamoyl aspartate and inorganic phosphate, the committed step in the de novo pyrimidine nucleotide biosynthesis pathway. This Chlorobaculum tepidum (strain ATCC 49652 / DSM 12025 / NBRC 103806 / TLS) (Chlorobium tepidum) protein is Aspartate carbamoyltransferase catalytic subunit.